Reading from the N-terminus, the 4235-residue chain is Tenellin synthetase (4235 aa).

The Ketosynthase family 3 (KS3) domain occupies 15–455; the sequence is SEPIAIVGSA…GTNAHAIIER (441 aa). Residues Cys189, His326, and His375 each act as for beta-ketoacyl synthase activity in the active site. The tract at residues 590–924 is malonyl-CoA:ACP transacylase (MAT) domain; that stretch reads IFTGQGAQWP…ANDAVAFSTA (335 aa). The interval 993-1135 is N-terminal hotdog fold; that stretch reads HELLGRRMPD…GRIAVHLGAK (143 aa). Residues 993 to 1310 are dehydratase (DH) domain; the sequence is HELLGRRMPD…GFEVRAVGEP (318 aa). In terms of domain architecture, PKS/mFAS DH spans 993–1313; that stretch reads HELLGRRMPD…VRAVGEPDAS (321 aa). The Proton acceptor; for dehydratase activity role is filled by His1025. The tract at residues 1158 to 1313 is C-terminal hotdog fold; it reads LQQLDCEKLY…VRAVGEPDAS (156 aa). The active-site Proton donor; for dehydratase activity is the Asp1217. Residues 1459 to 1652 form a methyltransferase (MT) domain region; the sequence is RLYTEDKGMH…FSGVDHIVHD (194 aa). The tract at residues 2208–2381 is ketoreductase (KR) domain; sequence TYLMVGAAGG…AASIIHVGHV (174 aa). Positions 2500–2580 constitute a Carrier 1 domain; that stretch reads EAAAAALKGF…QLSALAAKLA (81 aa). Ser2540 carries the post-translational modification O-(pantetheine 4'-phosphoryl)serine. The segment at 2587-2709 is disordered; that stretch reads RAQLEEASGN…EISSNGFFTQ (123 aa). Residues 2605-2619 are compositionally biased toward basic and acidic residues; the sequence is NDKETGPSKKGKAQE. Polar residues-rich tracts occupy residues 2645–2659 and 2666–2678; these read GGSS…SSVS and QEST…NNGE. Low complexity predominate over residues 2679-2695; the sequence is STPSKSSNCNSDSGSDN. Residues 2720 to 3163 form a condensation (C) domain region; it reads REAPMSPAQS…TAQSVGDCVV (444 aa). Residues 3197 to 3609 form an adenylation (A) (KR) domain region; the sequence is CQQHSTKSAI…DGTLLCFGRI (413 aa). The disordered stretch occupies residues 3724–3750; it reads DEAAAATSPSNDNNNNNTPSGGGGEKM. The segment covering 3726–3742 has biased composition (low complexity); it reads AAAATSPSNDNNNNNTP. Residues 3748-3833 enclose the Carrier 2 domain; that stretch reads EKMTVRQGEL…GMARCVAEQR (86 aa). Ser3793 is modified (O-(pantetheine 4'-phosphoryl)serine). A disordered region spans residues 3860–3889; it reads EKLQHSSASSSSSSSSSSAGSSSTQRPRKT. Low complexity predominate over residues 3865–3882; the sequence is SSASSSSSSSSSSAGSSS. The segment at 3896–4141 is reductase (RED) domain; that stretch reads LTGATGFLGG…LDFGQVDKVV (246 aa).

In the C-terminal section; belongs to the NRP synthetase family.

Its pathway is secondary metabolite biosynthesis. Its function is as follows. Hybrid PKS-NRPS synthetase; part of the gene cluster that mediates the biosynthesis of tenellin-type 2-pyridones, iron-chelating compounds involved in iron stress tolerance, competition with the natural competitor fungus Metarhizium robertsii and insect hosts infection. TenS catalyzes the assembly of the polyketide-amino acid backbone. Because tenS lacks a designated enoylreductase (ER) domain, the required activity is provided the enoyl reductase tenC. Upon formation of the polyketide backbone on the thiotemplate, the triketide is transferred to the NRPS module and linked to tyrosine to produce the pyrrolidine-2-dione intermediates, including pretellinin A, 11-hydropretellenin A, 12-hydropretellenin A, 13-hydropretellenin A, 14-hydropretellenin A, 12-oxopretellenin A and prototellinin D. The pathway begins with the assembly of the polyketide-amino acid backbone by the hybrid PKS-NRPS tenS with the help of the enoyl reductase tenC. These enzymes catalyze the synthesis of the pyrrolidine-2-dione intermediates pretellinin A, 11-hydropretellenin A, 12-hydropretellenin A, 13-hydropretellenin A, 14-hydropretellenin A, 12-oxopretellenin A and prototellinin D. The cytochrome P450 monooxygenase tenA then catalyzes an oxidative ring expansion of pretenellin A and 14-hydropretellenin A to form the 2-pyridone core, leading to pretenellin B and pyridovericin, respectively. The cytochrome P450 monooxygenase tenB is then required for the selective N-hydroxylation of the 2-pyridone nitrogen of yield tellinin and 15-hydroxytellenin (15-HT), respectively. The UDP-glucosyltransferase GT1 and the methyltransferase MT1, located outside the tenS gene cluster, contribute to the stepwise glycosylation and methylation of 15-HT to obtain the glycoside pyridovericin-N-O-(4-O-methyl-beta-D-glucopyranoside) (PMGP). Additional related compounds such as 1-O-methyl-15-HT, (8Z)-1-O-methyl-15-HT, and O-methyltenellin A are also produced but the enzymes involved in their biosynthesis have still to be determined. The sequence is that of Tenellin synthetase from Beauveria bassiana (strain ARSEF 2860) (White muscardine disease fungus).